The following is a 750-amino-acid chain: Glycerophosphodiester phosphodiesterase GDPDL7 (750 aa).

A signal peptide spans 1 to 17; it reads MLRFIIFFSLFIHLCVA. GP-PDE domains lie at 41–339 and 355–654; these read PAVV…SQSI and ALVI…TRYL. 4 N-linked (GlcNAc...) asparagine glycosylation sites follow: Asn-134, Asn-304, Asn-603, and Asn-716.

It belongs to the glycerophosphoryl diester phosphodiesterase family. In terms of tissue distribution, expressed in flowers and siliques.

The enzyme catalyses a sn-glycero-3-phosphodiester + H2O = an alcohol + sn-glycerol 3-phosphate + H(+). The polypeptide is Glycerophosphodiester phosphodiesterase GDPDL7 (Arabidopsis thaliana (Mouse-ear cress)).